A 718-amino-acid polypeptide reads, in one-letter code: Auxin response factor 2 (718 aa).

The segment at Met-1–Val-24 is disordered. Positions Thr-8–Gly-18 are enriched in acidic residues. Positions Phe-147–Ala-249 form a DNA-binding region, TF-B3.

This sequence belongs to the ARF family. In terms of assembly, homo and heterodimers. In terms of tissue distribution, expressed in roots, culms, leaves and young panicles.

Its subcellular location is the nucleus. In terms of biological role, auxin response factors (ARFs) are transcriptional factors that bind specifically to the DNA sequence 5'-TGTCTC-3' found in the auxin-responsive promoter elements (AuxREs). This chain is Auxin response factor 2 (ARF2), found in Oryza sativa subsp. japonica (Rice).